A 731-amino-acid polypeptide reads, in one-letter code: MATDDSIIVLDDDDEDEAAAQPGPSNPASNPVSPGPEASGPSESHGDGGSSNSGSRKCYKLENEKLFEEFLELCKMQTSDHPEVVPFLHKLQQRAQSAFLASAEFRNILSRVLSRSRNRPAKLYVYINELCTVLKAHSIKKKLNLAPAASAESSGDNPPTDPPSDLTNTETTASEASRTRGSRRQIQRLEQLLALYVAEIQRLQEKELDLSELDDPDSSYLQEARLKRKLIRLFGRLCDLKDCSSLTGKVIEQRIPYRGTRYPEVNRRIERLINKPGPDTFPDYGDVLRAVEKAATRHSLGLPRQQLQLLAQDAFRDVGVRLQERRHLDLIYNFGCHLTDDYRPGVDPALTDPTLARRLRENRTLAMSRLDEVISKYAMMQDKSEEGERQKRRARLLATSQSSDLPKASSDSGEGPSGVASQEDPTTPKAETEDEEDDEESDDEEEEEEEEEEEATEDEDEDLEQLQEDQDDEEEEEGDNEDDKSPASPSPIFRRKEFSNPQKGSGPQEEQQERGLTGTPASPLEASPGLPSTDAESSGEQLQERLLAGESPVSQLSELDMEALPEETIPSPEERGISSSRRKSDSSLPTILENGAAMVTSTSFNGRVSSHPCRDASPPSKRFRKEKKQLGPGPLGNSYVKKQTMAQQDSGWKISVLSTPSSPLASVGPVADSSTRVDSPSHELVTSSLCNPSPSLILQTPQSQSPRPCIYKTSVATQCDPEEIIVLSDSD.

Positions 1 to 56 are disordered; it reads MATDDSIIVLDDDDEDEAAAQPGPSNPASNPVSPGPEASGPSESHGDGGSSNSGSR. The interval 1–158 is necessary for interaction with USP7 and ATRX; it reads MATDDSIIVL…ASAESSGDNP (158 aa). Ser-25 carries the post-translational modification Phosphoserine. The span at 31–43 shows a compositional bias: low complexity; that stretch reads PVSPGPEASGPSE. Residue Lys-142 forms a Glycyl lysine isopeptide (Lys-Gly) (interchain with G-Cter in SUMO2) linkage. The segment at 147–183 is disordered; that stretch reads PAASAESSGDNPPTDPPSDLTNTETTASEASRTRGSR. Polar residues predominate over residues 165-176; the sequence is DLTNTETTASEA. Coiled-coil stretches lie at residues 177–215 and 368–395; these read SRTR…ELDD and SRLD…RRAR. An interaction with histone H3.3 region spans residues 181–414; that stretch reads GSRRQIQRLE…LPKASSDSGE (234 aa). The residue at position 211 (Ser-211) is a Phosphoserine. A necessary for interaction with USP7 region spans residues 345 to 560; sequence GVDPALTDPT…SPVSQLSELD (216 aa). The segment at 381-639 is disordered; sequence QDKSEEGERQ…LGPGPLGNSY (259 aa). A Nuclear localization signal motif is present at residues 391–395; it reads KRRAR. Polar residues predominate over residues 398–412; the sequence is ATSQSSDLPKASSDS. Ser-409 and Ser-421 each carry phosphoserine. Residues 428 to 485 adopt a coiled-coil conformation; sequence PKAETEDEEDDEESDDEEEEEEEEEEEATEDEDEDLEQLQEDQDDEEEEEGDNEDDKS. Acidic residues predominate over residues 432–482; it reads TEDEEDDEESDDEEEEEEEEEEEATEDEDEDLEQLQEDQDDEEEEEGDNED. At Thr-456 the chain carries Phosphothreonine. Residues Ser-485, Ser-488, Ser-490, and Ser-499 each carry the phosphoserine modification. Polar residues predominate over residues 499–509; it reads SNPQKGSGPQE. At Lys-503 the chain carries N6-acetyllysine. Residues Ser-527, Ser-551, and Ser-571 each carry the phosphoserine modification. Polar residues predominate over residues 599 to 608; it reads VTSTSFNGRV. Ser-617 carries the phosphoserine modification. Positions 617–731 are interaction with SPOP; the sequence is SPPSKRFRKE…EEIIVLSDSD (115 aa). Residue Lys-621 forms a Glycyl lysine isopeptide (Lys-Gly) (interchain with G-Cter in SUMO1) linkage. The Nuclear localization signal signature appears at 622–628; the sequence is RFRKEKK. Ser-661, Ser-662, Ser-679, Ser-693, Ser-728, and Ser-730 each carry phosphoserine. The interval 663–688 is disordered; that stretch reads PLASVGPVADSSTRVDSPSHELVTSS. Residues 672–688 are compositionally biased toward polar residues; the sequence is DSSTRVDSPSHELVTSS. Positions 724–731 are sumo interaction motif (SIM); it reads IIVLSDSD.

The protein belongs to the DAXX family. As to quaternary structure, homomultimer. Interacts (via C-terminus) with TNFRSF6 (via death domain). Interacts with PAX5, SLC2A4/GLUT4, MAP3K5, TGFBR2, phosphorylated dimeric HSPB1/HSP27, CENPC, ETS1, sumoylated PML, UBE2I, MCRS1 and TP53. Interacts (via N-terminus) with HIPK2 and HIPK3. Interacts with HIPK1, which induces translocation from PML/POD/ND10 nuclear bodies to chromatin and enhances association with HDAC1. Interacts (non-phosphorylated) with PAX3, PAX7, DEK, HDAC1, HDAC2, HDAC3, acetylated histone H4 and histones H2A, H2B, H3, H3.3 and H4. Interacts with SPOP; mediating CUL3-dependent proteasomal degradation. Interacts with CBP; the interaction is dependent the sumoylation of CBP and suppresses CBP transcriptional activity via recruitment of HDAC2 directly in the complex with TP53 and HIPK2. Interacts with AXIN1; the interaction stimulates the interaction of DAXX with TP53, stimulates 'Ser-46' phosphorylation of TP53 on and induces cell death on UV irradiation. Interacts with MDM2; the interaction is direct. Interacts with USP7; the interaction is direct and independent of MDM2 and TP53. Part of a complex with DAXX, MDM2 and USP7 under non-stress conditions. Interacts (via N-terminus) with RASSF1 (via C-terminus); the interaction is independent of MDM2 and TP53; RASSF1 isoform A disrupts interactions among MDM2, DAXX and USP7, thus contributing to the efficient activation of TP53 by promoting MDM2 self-ubiquitination in cell-cycle checkpoint control in response to DNA damage. Interacts with ATRX to form the chromatin remodeling complex ATRX:DAXX. Interacts with HSF1 (via homotrimeric form preferentially); this interaction relieves homotrimeric HSF1 from repression of its transcriptional activity by HSP90-dependent multichaperone complex upon heat shock. In terms of processing, sumoylated with SUMO1 on multiple lysine residues. Post-translationally, repressor activity is down-regulated upon Ser-661 phosphorylation. Upon neuronal activation dephosphorylated by calcineurin in a Ca2+ dependent manner at Ser-661; dephosphorylation positively affects histone H3.3 loading and transcriptional activation. Polyubiquitinated; which is promoted by CUL3 and SPOP and results in proteasomal degradation. Ubiquitinated by MDM2; inducing its degradation. Deubiquitinated by USP7; leading to stabilize it.

The protein localises to the cytoplasm. It localises to the nucleus. Its subcellular location is the nucleoplasm. It is found in the PML body. The protein resides in the nucleolus. The protein localises to the chromosome. It localises to the centromere. Its function is as follows. Transcription corepressor known to repress transcriptional potential of several sumoylated transcription factors. Down-regulates basal and activated transcription. Its transcription repressor activity is modulated by recruiting it to subnuclear compartments like the nucleolus or PML/POD/ND10 nuclear bodies through interactions with MCSR1 and PML, respectively. Seems to regulate transcription in PML/POD/ND10 nuclear bodies together with PML and may influence TNFRSF6-dependent apoptosis thereby. Inhibits transcriptional activation of PAX3 and ETS1 through direct protein-protein interactions. Modulates PAX5 activity; the function seems to involve CREBBP. Acts as an adapter protein in a MDM2-DAXX-USP7 complex by regulating the RING-finger E3 ligase MDM2 ubiquitination activity. Under non-stress condition, in association with the deubiquitinating USP7, prevents MDM2 self-ubiquitination and enhances the intrinsic E3 ligase activity of MDM2 towards TP53, thereby promoting TP53 ubiquitination and subsequent proteasomal degradation. Upon DNA damage, its association with MDM2 and USP7 is disrupted, resulting in increased MDM2 autoubiquitination and consequently, MDM2 degradation, which leads to TP53 stabilization. Acts as a histone chaperone that facilitates deposition of histone H3.3. Acts as a targeting component of the chromatin remodeling complex ATRX:DAXX which has ATP-dependent DNA translocase activity and catalyzes the replication-independent deposition of histone H3.3 in pericentric DNA repeats outside S-phase and telomeres, and the in vitro remodeling of H3.3-containing nucleosomes. Does not affect the ATPase activity of ATRX but alleviates its transcription repression activity. Upon neuronal activation associates with regulatory elements of selected immediate early genes where it promotes deposition of histone H3.3 which may be linked to transcriptional induction of these genes. Required for the recruitment of histone H3.3:H4 dimers to PML-nuclear bodies (PML-NBs); the process is independent of ATRX and facilitated by ASF1A; PML-NBs are suggested to function as regulatory sites for the incorporation of newly synthesized histone H3.3 into chromatin. Proposed to mediate activation of the JNK pathway and apoptosis via MAP3K5 in response to signaling from TNFRSF6 and TGFBR2. Interaction with HSPB1/HSP27 may prevent interaction with TNFRSF6 and MAP3K5 and block DAXX-mediated apoptosis. In contrast, in lymphoid cells JNC activation and TNFRSF6-mediated apoptosis may not involve DAXX. Plays a role as a positive regulator of the heat shock transcription factor HSF1 activity during the stress protein response. The polypeptide is Death domain-associated protein 6 (Daxx) (Rattus norvegicus (Rat)).